A 602-amino-acid polypeptide reads, in one-letter code: MAALAAAAKKVWSARRLLVLLFTPLALLPVVFALPPKEGRCLFVILLMAVYWCTEALPLSVTALLPIVLFPFMGILPSNKVCPQYFLDTNFLFLSGLIMASAIEEWNLHRRIALKILMLVGVQPARLILGMMVTTSFLSMWLSNTASTAMMLPIANAILKSLFGQKEVRKDPSQESEENTAAVRRNGLHTVPTEMQFLASTEAKDHPGETEVPLDLPADSRKEDEYRRNIWKGFLISIPYSASIGGTATLTGTAPNLILLGQLKSFFPQCDVVNFGSWFIFAFPLMLLFLLAGWLWISFLYGGLSFRGWRKNKSEIRTNAEDRARAVIREEYQNLGPIKFAEQAVFILFCMFAILLFTRDPKFIPGWASLFNPGFLSDAVTGVAIVTILFFFPSQRPSLKWWFDFKAPNTETEPLLTWKKAQETVPWNIILLLGGGFAMAKGCEESGLSVWIGGQLHPLENVPPALAVLLITVVIAFFTEFASNTATIIIFLPVLAELAIRLRVHPLYLMIPGTVGCSFAFMLPVSTPPNSIAFASGHLLVKDMVRTGLLMNLMGVLLLSLAMNTWAQTIFQLGTFPDWADMYSVNVTALPPTLANDTFRTL.

Over 1–16 (MAALAAAAKKVWSARR) the chain is Cytoplasmic. A helical transmembrane segment spans residues 17–37 (LLVLLFTPLALLPVVFALPPK). At 38-55 (EGRCLFVILLMAVYWCTE) the chain is on the extracellular side. A helical transmembrane segment spans residues 56 to 76 (ALPLSVTALLPIVLFPFMGIL). Residues 77-82 (PSNKVC) are Cytoplasmic-facing. The chain crosses the membrane as a helical span at residues 83–103 (PQYFLDTNFLFLSGLIMASAI). The Extracellular segment spans residues 104-137 (EEWNLHRRIALKILMLVGVQPARLILGMMVTTSF). A helical membrane pass occupies residues 138–158 (LSMWLSNTASTAMMLPIANAI). Residues 159–229 (LKSLFGQKEV…SRKEDEYRRN (71 aa)) lie on the Cytoplasmic side of the membrane. A helical transmembrane segment spans residues 230–250 (IWKGFLISIPYSASIGGTATL). The Extracellular segment spans residues 251–278 (TGTAPNLILLGQLKSFFPQCDVVNFGSW). Residues 279–299 (FIFAFPLMLLFLLAGWLWISF) form a helical membrane-spanning segment. At 300–336 (LYGGLSFRGWRKNKSEIRTNAEDRARAVIREEYQNLG) the chain is on the cytoplasmic side. A helical transmembrane segment spans residues 337 to 357 (PIKFAEQAVFILFCMFAILLF). Over 358-372 (TRDPKFIPGWASLFN) the chain is Extracellular. The helical transmembrane segment at 373-393 (PGFLSDAVTGVAIVTILFFFP) threads the bilayer. Over 394 to 422 (SQRPSLKWWFDFKAPNTETEPLLTWKKAQ) the chain is Cytoplasmic. The segment at residues 423–443 (ETVPWNIILLLGGGFAMAKGC) is an intramembrane region (helical). The Cytoplasmic portion of the chain corresponds to 444–461 (EESGLSVWIGGQLHPLEN). A helical transmembrane segment spans residues 462 to 482 (VPPALAVLLITVVIAFFTEFA). Residues 483 to 505 (SNTATIIIFLPVLAELAIRLRVH) lie on the Extracellular side of the membrane. The chain crosses the membrane as a helical span at residues 506 to 526 (PLYLMIPGTVGCSFAFMLPVS). Residues 527 to 546 (TPPNSIAFASGHLLVKDMVR) lie on the Cytoplasmic side of the membrane. The helical transmembrane segment at 547-567 (TGLLMNLMGVLLLSLAMNTWA) threads the bilayer. The Extracellular segment spans residues 568 to 602 (QTIFQLGTFPDWADMYSVNVTALPPTLANDTFRTL). 2 N-linked (GlcNAc...) asparagine glycosylation sites follow: N586 and N596.

The protein belongs to the SLC13A/DASS transporter (TC 2.A.47) family. NADC subfamily. As to expression, expression is highest in kidney. Detected in placenta, brain, liver and pancreas.

The protein resides in the cell membrane. The catalysed reaction is succinate(out) + 3 Na(+)(out) = succinate(in) + 3 Na(+)(in). It carries out the reaction 2-oxoglutarate(out) + 3 Na(+)(out) = 2-oxoglutarate(in) + 3 Na(+)(in). The enzyme catalyses N-acetyl-L-aspartate(out) + 3 Na(+)(out) = N-acetyl-L-aspartate(in) + 3 Na(+)(in). It catalyses the reaction glutarate(out) + 3 Na(+)(out) = glutarate(in) + 3 Na(+)(in). The catalysed reaction is fumarate(out) + 3 Na(+)(out) = fumarate(in) + 3 Na(+)(in). It carries out the reaction malate(out) + 3 Na(+)(out) = malate(in) + 3 Na(+)(in). The enzyme catalyses 2,2-dimethylsuccinate(out) + 3 Na(+)(out) = 2,2-dimethylsuccinate(in) + 3 Na(+)(in). It catalyses the reaction 2,3-dimethylsuccinate(out) + 3 Na(+)(out) = 2,3-dimethylsuccinate(in) + 3 Na(+)(in). The catalysed reaction is itaconate(out) + 3 Na(+)(out) = itaconate(in) + 3 Na(+)(in). Li(+) decreases succinate transport in the presence of Na(+). Functionally, high-affinity sodium-dicarboxylate cotransporter that accepts a range of substrates with 4-6 carbon atoms, such as the citric acid cycle intermediates succinate and alpha-ketoglutarate (2-oxoglutarate), as well as other compounds including N-acetyl-L-aspartate. Transports the dicarboxylate into the cell with a probable stoichiometry of 3 Na(+) for 1 divalent dicarboxylate, rendering the process electrogenic. Can transport citrate in a Na(+)-dependent manner, recognizing the divalent form of citrate rather than the trivalent form which is normally found in blood. Imports itaconate in hepatocytes leading to activation of TFEB-dependent lysosomal biogenesis involved in antibacterial innate immune response. The polypeptide is Na(+)/dicarboxylate cotransporter 3 (SLC13A3) (Homo sapiens (Human)).